The following is a 466-amino-acid chain: tRNA modification GTPase MnmE (466 aa).

The (6S)-5-formyl-5,6,7,8-tetrahydrofolate site is built by arginine 25, glutamate 82, and lysine 127. Residues 223-388 enclose the TrmE-type G domain; the sequence is GIKVVIAGQP…LRRQLLQIAG (166 aa). A K(+)-binding site is contributed by asparagine 233. GTP contacts are provided by residues 233 to 238, 252 to 258, 277 to 280, 346 to 349, and 369 to 371; these read NAGKSS, TPIAGTT, DTAG, NKAD, and SAR. Serine 237 is a binding site for Mg(2+). The K(+) site is built by threonine 252, isoleucine 254, and threonine 257. Threonine 258 contributes to the Mg(2+) binding site. A (6S)-5-formyl-5,6,7,8-tetrahydrofolate-binding site is contributed by lysine 466.

The protein belongs to the TRAFAC class TrmE-Era-EngA-EngB-Septin-like GTPase superfamily. TrmE GTPase family. In terms of assembly, homodimer. Heterotetramer of two MnmE and two MnmG subunits. It depends on K(+) as a cofactor.

The protein resides in the cytoplasm. In terms of biological role, exhibits a very high intrinsic GTPase hydrolysis rate. Involved in the addition of a carboxymethylaminomethyl (cmnm) group at the wobble position (U34) of certain tRNAs, forming tRNA-cmnm(5)s(2)U34. This is tRNA modification GTPase MnmE from Acidovorax sp. (strain JS42).